The chain runs to 894 residues: MDESALLDLLECPVCLERLDASAKVLPCQHTFCKRCLLGIVGSRNELRCPECRTLVGSGVDELPSNILLVRLLDGIKQRPWKPGPGGGGSTTCTNVLRAQGSTVVNCGSKDLQSPQCGQQPRVQAWSPPVRGIPQLPCAKALYNYEGKEPGDLKFSKGDIIILRRQVDENWYHGEVNGVHGFFPTNFVQIIKPLPQPPPQCKALYDFEVKDKEADKDCLPFAKDDVLTVIRRVDENWAEGMLADKIGIFPISYVEFNSAAKQLIEWDKPPVPGVDTAECPSATAAQSSSASKHSDTKKNTRKRHSFTSLTMANKSSQASQNRHSMEISPPVLISSSNPTAAARISELSGLSCSAPSQVHISTTGLIVTPPPSSPVTTGPSFTFPTDVPYQAALGTMNPPLPPPPLLATTVLASTPSGATAAAVAAAAAAVAAGVGPRPAVGSTEQIAHLRPQTRPSVYVAIYPYTPRKEDELELRKGEMFLVFERCQDGWYKGTSMHTSKIGVFPGNYVAPVTRAVTNASQAKVPMSTAGQASRGVTMVSPSTAGGPAQKPQGNGVAGNPSVVPTAVVSAAHIQTSPQAKVLLHMTGQMTVNQARNAVRTVAAHNQERPTAAVTPIQVQNAACIGPASVGLPHHSLASQPLPPMVGPAAHIAAVNINRTSVPLACAAGASSLASPNMTTAALETEPSGRTVTILPGLPTSPESAASACGNSSAVKPDKDSKKEKKGLLKLLSGASTKRKPRVSPPASPTLDVELGSGEVPLQGAVGPELPLGGVHGRVGSCPTDGDGPVAAGTAALAQDAFHRKTSSLDSAVPIAPPPRQACSSLGPVMNEARPVVCERHRVVVSYPPQSEAELELKEGDIVFVHKKREDGWFKGTLQRNGKTGLFPGSFVENI.

The segment at C12 to R53 adopts an RING-type zinc-finger fold. 2 consecutive SH3 domains span residues P134–P193 and Q196–A259. The interval V274 to H323 is disordered. Positions S281 to S291 are enriched in low complexity. Residues H293 to T363 are interaction with RAC1. S305 carries the phosphoserine modification. Over residues F306–R322 the composition is skewed to polar residues. The interval H448–P551 is interaction with AKT2. In terms of domain architecture, SH3 3 spans T453–R514. Disordered stretches follow at residues M526–V556 and L682–D751. At S540 the chain carries Phosphoserine. Positions S700–A713 are enriched in polar residues. Residues K715 to G726 are compositionally biased toward basic and acidic residues. Phosphoserine is present on S743. One can recognise an SH3 4 domain in the interval V835 to I894.

This sequence belongs to the SH3RF family. In terms of assembly, interacts with HERP1. Interacts with RAC1; in a GTP-dependent manner. Interacts with MAP3K10/MLK2 and MAP3K11/MLK3. Interacts with MAPK8IP; this interaction leads to the PJAC complex (POSH-JIP or SH3RF1/MAPK8IP apoptotic complex) with a 1:1 ratio. Interacts with SIAH1. Probably part of a signaling complex that may contain SH3RF1, MAPK8IP, DLK1, MAP2K4/MKK4, MAP2K7/MKK7, MAPK8/JNK1, MAPK9/JNK2, AKT1 and AKT2. Found in a complex with RAC2, MAP3K7/TAK1, MAP2K7/MKK7, MAPK8IP1/JIP1, MAPK8/JNK1 and MAPK9/JNK2. Found in a complex with RAC1, MAP3K11/MLK3, MAP2K7/MKK7, MAPK8IP1/JIP1 and MAPK8/JNK1. Interacts with SH3RF2. Post-translationally, phosphorylated at Ser-305 by AKT1 and AKT2. When phosphorylated, it has reduced ability to bind Rac. Autoubiquitinated. Ubiquitinated by SH3RF2, leading to proteasome-mediated degradation.

The protein resides in the cytoplasm. Its subcellular location is the perinuclear region. It is found in the cell projection. The protein localises to the lamellipodium. It localises to the golgi apparatus. The protein resides in the trans-Golgi network. It catalyses the reaction S-ubiquitinyl-[E2 ubiquitin-conjugating enzyme]-L-cysteine + [acceptor protein]-L-lysine = [E2 ubiquitin-conjugating enzyme]-L-cysteine + N(6)-ubiquitinyl-[acceptor protein]-L-lysine.. It participates in protein modification; protein ubiquitination. Its function is as follows. Has E3 ubiquitin-protein ligase activity. In the absence of an external substrate, it can catalyze self-ubiquitination. Stimulates ubiquitination of potassium channel KCNJ1, enhancing it's dynamin-dependent and clathrin-independent endocytosis. Acts as a scaffold protein that coordinates with MAPK8IP1/JIP1 in organizing different components of the JNK pathway, including RAC1 or RAC2, MAP3K11/MLK3 or MAP3K7/TAK1, MAP2K7/MKK7, MAPK8/JNK1 and/or MAPK9/JNK2 into a functional multiprotein complex to ensure the effective activation of the JNK signaling pathway. Regulates the differentiation of CD4(+) and CD8(+) T-cells and promotes T-helper 1 (Th1) cell differentiation. Regulates the activation of MAPK8/JNK1 and MAPK9/JNK2 in CD4(+) T-cells and the activation of MAPK8/JNK1 in CD8(+) T-cells. Plays a crucial role in the migration of neocortical neurons in the developing brain. Controls proper cortical neuronal migration and the formation of proximal cytoplasmic dilation in the leading process (PCDLP) in migratory neocortical neurons by regulating the proper localization of activated RAC1 and F-actin assembly. The chain is E3 ubiquitin-protein ligase SH3RF1 (Sh3rf1) from Rattus norvegicus (Rat).